The following is a 229-amino-acid chain: Octanoyltransferase (229 aa).

The 194-residue stretch at Pro30 to Pro223 folds into the BPL/LPL catalytic domain. Substrate is bound by residues Arg69–His76, Ala141–Gly143, and Gly154–Ser156. The Acyl-thioester intermediate role is filled by Cys172.

This sequence belongs to the LipB family.

It is found in the cytoplasm. The enzyme catalyses octanoyl-[ACP] + L-lysyl-[protein] = N(6)-octanoyl-L-lysyl-[protein] + holo-[ACP] + H(+). It participates in protein modification; protein lipoylation via endogenous pathway; protein N(6)-(lipoyl)lysine from octanoyl-[acyl-carrier-protein]: step 1/2. Its function is as follows. Catalyzes the transfer of endogenously produced octanoic acid from octanoyl-acyl-carrier-protein onto the lipoyl domains of lipoate-dependent enzymes. Lipoyl-ACP can also act as a substrate although octanoyl-ACP is likely to be the physiological substrate. The chain is Octanoyltransferase from Ralstonia pickettii (strain 12J).